A 93-amino-acid chain; its full sequence is Small ribosomal subunit protein uS19 (93 aa).

The tract at residues 72–93 (GEFSPTRTYRGHNKKDKKMQKK) is disordered. The segment covering 80–93 (YRGHNKKDKKMQKK) has biased composition (basic residues).

Belongs to the universal ribosomal protein uS19 family.

In terms of biological role, protein S19 forms a complex with S13 that binds strongly to the 16S ribosomal RNA. The sequence is that of Small ribosomal subunit protein uS19 from Aster yellows witches'-broom phytoplasma (strain AYWB).